The sequence spans 368 residues: mRNA export factor (368 aa).

The interval 15–34 (TSMFGSATTDNHNPMKDIEV) is disordered. 7 WD repeats span residues 37-79 (SPDD…QTIP), 84-114 (MHTG…KMWD), 125-157 (QHDA…KFWD), 168-206 (QLPE…EFRR), 215-255 (HRCV…KDNF), 271-301 (QDIY…SFWD), and 310-346 (TSEQ…EFYN). Position 229 is a phosphothreonine (Thr-229).

This sequence belongs to the WD repeat rae1 family. Interacts with NUMA1 (via N-terminal end of the coiled-coil domain); this interaction promotes spindle formation in mitosis. Interacts with NUP98. Interacts with MYCBP2. Interacts with USP11.

The protein resides in the cytoplasm. The protein localises to the nucleus. It localises to the cytoskeleton. Its subcellular location is the spindle pole. Functionally, plays a role in mitotic bipolar spindle formation. Binds mRNA. May function in nucleocytoplasmic transport and in directly or indirectly attaching cytoplasmic mRNPs to the cytoskeleton. In Macaca fascicularis (Crab-eating macaque), this protein is mRNA export factor (RAE1).